A 529-amino-acid polypeptide reads, in one-letter code: MELPQPRPFKTQGRKPTHDFLSLCSHSTVHPDPKPTPPPSSQGSHLKTHDFLQPLECVGAKEDVSRINSTTTASEKPPPPAPPPPLQHVLPGGIGTYTISPIPYFHHHHQRIPKPELSPPMMFNANERNVLDENSNSNCSSYAAASSGFTLWDESASGKKGQTRKENSVGERVNMRADVAATVGQWPVAERRSQSLTNNHMSGFSSLSSSQGSVLKSQSFMDMIRSAKGSSQEDDLDDEEDFIMKKESSSTSQSHRVDLRVKADVRGSPNDQKLNTPRSKHSATEQRRRSKINDRFQMLRQLIPNSDQKRDKASFLLEVIEYIQFLQEKADKYVTSYQGWNHEPAKLLNWQSNNNQQLVPEGVAFAPKLEEEKNNIPVSVLATAQGVVIDHPTTATTSPFPLSIQSNSFFSPVIAGNPVPQFHARVASSEAVEPSPSSRSQKEEEDEEVLEGNIRISSVYSQGLVKTLREALENSGVDLTKASISVEIELAKQSSSSSFKDHEVREPVSRTRNDNVKQTRKPKRLKTGQ.

Disordered regions lie at residues 1–91, 245–291, 425–450, and 491–529; these read MELP…HVLP, KKES…RRSK, RVAS…EEVL, and AKQS…KTGQ. Residues 76–86 show a composition bias toward pro residues; the sequence is KPPPPAPPPPL. Composition is skewed to basic and acidic residues over residues 255–265 and 282–291; these read HRVDLRVKADV and SATEQRRRSK. The region spanning 276-326 is the bHLH domain; that stretch reads TPRSKHSATEQRRRSKINDRFQMLRQLIPNSDQKRDKASFLLEVIEYIQFL. Positions 426–438 are enriched in low complexity; sequence VASSEAVEPSPSS. The segment covering 499-517 has biased composition (basic and acidic residues); it reads FKDHEVREPVSRTRNDNVK. A compositionally biased stretch (basic residues) spans 518-529; sequence QTRKPKRLKTGQ.

Homodimer. Interacts with BZR2/BES1 through both C-terminal and bHLH domains. Also interacts with LHW. In terms of tissue distribution, expressed constitutively in roots.

It is found in the nucleus. Functionally, positive brassinosteroid-signaling protein. Transcription factor that bind specifically to the DNA sequence 5'-CANNTG-3'(E box). Can bind individually to the promoter as a homodimer or synergistically as a heterodimer with BZR2/BES1. Does not itself activate transcription but enhances BZR2/BES1-mediated target gene activation. The sequence is that of Transcription factor BIM1 (BIM1) from Arabidopsis thaliana (Mouse-ear cress).